A 61-amino-acid chain; its full sequence is Large ribosomal subunit protein bL32 (61 aa).

The span at 1 to 22 (MAVPKKKTSRARRDRRRSHHAL) shows a compositional bias: basic residues. Residues 1–24 (MAVPKKKTSRARRDRRRSHHALRG) form a disordered region.

The protein belongs to the bacterial ribosomal protein bL32 family.

This chain is Large ribosomal subunit protein bL32, found in Rubrobacter xylanophilus (strain DSM 9941 / JCM 11954 / NBRC 16129 / PRD-1).